We begin with the raw amino-acid sequence, 545 residues long: CTP synthase (545 aa).

Positions 1–265 are amidoligase domain; the sequence is MNGIKHIFIT…DKFVIKHLDL (265 aa). A CTP-binding site is contributed by serine 15. Serine 15 is a UTP binding site. Residues 16–21 and aspartate 73 contribute to the ATP site; that span reads SIGKGL. Mg(2+) is bound by residues aspartate 73 and glutamate 141. Residues 148-150, 188-193, and lysine 224 contribute to the CTP site; these read DIE and KTKPTQ. UTP contacts are provided by residues 188–193 and lysine 224; that span reads KTKPTQ. The Glutamine amidotransferase type-1 domain maps to 290 to 534; sequence EIAIIGKYTG…VAAALARKEI (245 aa). Residue glycine 349 coordinates L-glutamine. Cysteine 376 serves as the catalytic Nucleophile; for glutamine hydrolysis. Residues 377 to 380, glutamate 400, and arginine 460 each bind L-glutamine; that span reads LGMQ. Catalysis depends on residues histidine 507 and glutamate 509.

Belongs to the CTP synthase family. In terms of assembly, homotetramer.

The enzyme catalyses UTP + L-glutamine + ATP + H2O = CTP + L-glutamate + ADP + phosphate + 2 H(+). The catalysed reaction is L-glutamine + H2O = L-glutamate + NH4(+). It catalyses the reaction UTP + NH4(+) + ATP = CTP + ADP + phosphate + 2 H(+). The protein operates within pyrimidine metabolism; CTP biosynthesis via de novo pathway; CTP from UDP: step 2/2. With respect to regulation, allosterically activated by GTP, when glutamine is the substrate; GTP has no effect on the reaction when ammonia is the substrate. The allosteric effector GTP functions by stabilizing the protein conformation that binds the tetrahedral intermediate(s) formed during glutamine hydrolysis. Inhibited by the product CTP, via allosteric rather than competitive inhibition. Its function is as follows. Catalyzes the ATP-dependent amination of UTP to CTP with either L-glutamine or ammonia as the source of nitrogen. Regulates intracellular CTP levels through interactions with the four ribonucleotide triphosphates. The sequence is that of CTP synthase from Tropheryma whipplei (strain TW08/27) (Whipple's bacillus).